A 166-amino-acid polypeptide reads, in one-letter code: Large ribosomal subunit protein uL10 (166 aa).

This sequence belongs to the universal ribosomal protein uL10 family. In terms of assembly, part of the ribosomal stalk of the 50S ribosomal subunit. The N-terminus interacts with L11 and the large rRNA to form the base of the stalk. The C-terminus forms an elongated spine to which L12 dimers bind in a sequential fashion forming a multimeric L10(L12)X complex.

Its function is as follows. Forms part of the ribosomal stalk, playing a central role in the interaction of the ribosome with GTP-bound translation factors. In Listeria innocua serovar 6a (strain ATCC BAA-680 / CLIP 11262), this protein is Large ribosomal subunit protein uL10.